We begin with the raw amino-acid sequence, 177 residues long: Adenine phosphoribosyltransferase (177 aa).

Belongs to the purine/pyrimidine phosphoribosyltransferase family. Homodimer.

The protein resides in the cytoplasm. It carries out the reaction AMP + diphosphate = 5-phospho-alpha-D-ribose 1-diphosphate + adenine. The protein operates within purine metabolism; AMP biosynthesis via salvage pathway; AMP from adenine: step 1/1. Catalyzes a salvage reaction resulting in the formation of AMP, that is energically less costly than de novo synthesis. This chain is Adenine phosphoribosyltransferase, found in Pelodictyon phaeoclathratiforme (strain DSM 5477 / BU-1).